The following is a 429-amino-acid chain: Enolase (429 aa).

Gln162 lines the (2R)-2-phosphoglycerate pocket. Glu204 (proton donor) is an active-site residue. Asp241, Glu282, and Asp309 together coordinate Mg(2+). Residues Lys334, Arg363, Ser364, and Lys385 each coordinate (2R)-2-phosphoglycerate. Lys334 functions as the Proton acceptor in the catalytic mechanism.

Belongs to the enolase family. Mg(2+) serves as cofactor.

It localises to the cytoplasm. Its subcellular location is the secreted. The protein resides in the cell surface. It carries out the reaction (2R)-2-phosphoglycerate = phosphoenolpyruvate + H2O. The protein operates within carbohydrate degradation; glycolysis; pyruvate from D-glyceraldehyde 3-phosphate: step 4/5. In terms of biological role, catalyzes the reversible conversion of 2-phosphoglycerate (2-PG) into phosphoenolpyruvate (PEP). It is essential for the degradation of carbohydrates via glycolysis. The chain is Enolase from Acidothermus cellulolyticus (strain ATCC 43068 / DSM 8971 / 11B).